The sequence spans 210 residues: Ribosomal RNA large subunit methyltransferase E (210 aa).

Residues Gly-61, Trp-63, Asp-81, Asp-97, and Asp-122 each coordinate S-adenosyl-L-methionine. Lys-162 functions as the Proton acceptor in the catalytic mechanism.

It belongs to the class I-like SAM-binding methyltransferase superfamily. RNA methyltransferase RlmE family.

It localises to the cytoplasm. The catalysed reaction is uridine(2552) in 23S rRNA + S-adenosyl-L-methionine = 2'-O-methyluridine(2552) in 23S rRNA + S-adenosyl-L-homocysteine + H(+). In terms of biological role, specifically methylates the uridine in position 2552 of 23S rRNA at the 2'-O position of the ribose in the fully assembled 50S ribosomal subunit. The sequence is that of Ribosomal RNA large subunit methyltransferase E from Xanthomonas campestris pv. campestris (strain 8004).